Reading from the N-terminus, the 351-residue chain is Minor outer capsid protein P9 (351 aa).

The tract at residues 245 to 310 is disordered; it reads GGVPAALPQP…VPSGNVSARG (66 aa). Residues 285-297 are compositionally biased toward basic and acidic residues; sequence MIRKKVETSKDGP.

It belongs to the phytoreovirus minor outer capsid protein P9 family.

Its subcellular location is the virion. It localises to the host cytoplasm. Minor outer capsid protein. The chain is Minor outer capsid protein P9 from Rice dwarf virus (isolate Akita) (RDV).